The following is a 461-amino-acid chain: Probable carboxypeptidase MGYG_04702 (461 aa).

The signal sequence occupies residues 1–20 (MQKTYLLALVSLLASSLVEA). N48 and N99 each carry an N-linked (GlcNAc...) asparagine glycan. D176 contacts Zn(2+). E208 acts as the Proton acceptor in catalysis. E209 contributes to the Zn(2+) binding site. N-linked (GlcNAc...) asparagine glycosylation is present at N396.

The protein belongs to the peptidase M20A family. Zn(2+) serves as cofactor.

It localises to the secreted. In Arthroderma gypseum (strain ATCC MYA-4604 / CBS 118893) (Microsporum gypseum), this protein is Probable carboxypeptidase MGYG_04702.